Consider the following 727-residue polypeptide: Anaphase-promoting complex subunit 5 (727 aa).

Phosphoserine is present on Ser-180. 13 TPR repeats span residues 194 to 234, 235 to 285, 286 to 322, 323 to 359, 360 to 390, 391 to 438, 439 to 472, 473 to 512, 513 to 552, 553 to 592, 593 to 632, 633 to 668, and 669 to 708; these read QKQA…FNPD, FAEA…GRSL, RYAALNLAALHCRFGHYQQAELALQEAIRIAQESNDH, VCLQHCLSWLYVLGQKRADSYVLLEHSVKKAVHFGLP, RAFAGKTANKLMDALKDSDLLHWKHSLSELI, DISI…TESF, AVALCHLAELHAEQGCFAAAGEVLKHLKERFPPN, SQHAQLWMLCDQKIQFDRAMNDGKFHLADSLVTGITALNG, IEGVYRKAVVLQAQNQMTEAHKLLQKLLTYCQKLKNTEMV, ISVLLSVAELYWRSSSPTIAMPVLLEALALSKEYRLQYLA, SETVLNLAYAQLILGIPEQALTLLHMAIEPILADGAILDK, GRAMFLVSKCQVASAASYDPVKKAEALEAAIQNLTE, and AKNYFAKVDCRERIRDVSYFQARLYHALGKTQERNHCAMV. Thr-217 is subject to Phosphothreonine.

The protein belongs to the APC5 family. The mammalian APC/C is composed at least of 14 distinct subunits ANAPC1, ANAPC2, CDC27/APC3, ANAPC4, ANAPC5, CDC16/APC6, ANAPC7, CDC23/APC8, ANAPC10, ANAPC11, CDC26/APC12, ANAPC13, ANAPC15 and ANAPC16 that assemble into a complex of at least 19 chains with a combined molecular mass of around 1.2 MDa; APC/C interacts with FZR1 and FBXO5.

Its subcellular location is the nucleus. The protein resides in the cytoplasm. The protein localises to the cytoskeleton. It is found in the spindle. The protein operates within protein modification; protein ubiquitination. In terms of biological role, component of the anaphase promoting complex/cyclosome (APC/C), a cell cycle-regulated E3 ubiquitin ligase that controls progression through mitosis and the G1 phase of the cell cycle. The APC/C complex acts by mediating ubiquitination and subsequent degradation of target proteins: it mainly mediates the formation of 'Lys-11'-linked polyubiquitin chains and, to a lower extent, the formation of 'Lys-48'- and 'Lys-63'-linked polyubiquitin chains. The APC/C complex catalyzes assembly of branched 'Lys-11'-/'Lys-48'-linked branched ubiquitin chains on target proteins. The sequence is that of Anaphase-promoting complex subunit 5 (Anapc5) from Rattus norvegicus (Rat).